A 92-amino-acid polypeptide reads, in one-letter code: Small ribosomal subunit protein uS19 (92 aa).

Belongs to the universal ribosomal protein uS19 family.

Functionally, protein S19 forms a complex with S13 that binds strongly to the 16S ribosomal RNA. This chain is Small ribosomal subunit protein uS19, found in Francisella philomiragia subsp. philomiragia (strain ATCC 25017 / CCUG 19701 / FSC 153 / O#319-036).